The sequence spans 239 residues: Carboxy-S-adenosyl-L-methionine synthase (239 aa).

Residues Tyr35, Gly64–Ser66, Asp88–Asn89, and Arg195 contribute to the S-adenosyl-L-methionine site.

It belongs to the class I-like SAM-binding methyltransferase superfamily. Cx-SAM synthase family. As to quaternary structure, homodimer.

The enzyme catalyses prephenate + S-adenosyl-L-methionine = carboxy-S-adenosyl-L-methionine + 3-phenylpyruvate + H2O. Its function is as follows. Catalyzes the conversion of S-adenosyl-L-methionine (SAM) to carboxy-S-adenosyl-L-methionine (Cx-SAM). This chain is Carboxy-S-adenosyl-L-methionine synthase, found in Helicobacter pylori (strain G27).